Here is a 407-residue protein sequence, read N- to C-terminus: Serine/threonine transporter SstT (407 aa).

The next 9 helical transmembrane spans lie at 14 to 34, 48 to 68, 82 to 102, 141 to 161, 192 to 212, 218 to 238, 290 to 310, 316 to 336, and 363 to 383; these read GSLVLQILVGIIAGVILATVS, FVGALKAIAPILVFILVAASI, IVILYLFGTFSAAVTAVLMSF, AVITGNYIGILAWGVGLGLAL, IGIFGLVSSTFATTGFSAIAG, LVLLGAMAIMALIINPAIVFF, IPLGATINMGGAAITITILTL, MGIQVDILTAILLSVVAGVSA, and VAMQVVAVGFIIGVIQDSAET.

Belongs to the dicarboxylate/amino acid:cation symporter (DAACS) (TC 2.A.23) family.

It localises to the cell inner membrane. The enzyme catalyses L-serine(in) + Na(+)(in) = L-serine(out) + Na(+)(out). It catalyses the reaction L-threonine(in) + Na(+)(in) = L-threonine(out) + Na(+)(out). Functionally, involved in the import of serine and threonine into the cell, with the concomitant import of sodium (symport system). In Shewanella pealeana (strain ATCC 700345 / ANG-SQ1), this protein is Serine/threonine transporter SstT.